Consider the following 129-residue polypeptide: Prefoldin subunit 6 (129 aa).

Residue A2 is modified to N-acetylalanine. K21 bears the N6-acetyllysine mark. An N6-acetyllysine; alternate modification is found at K66. K66 is covalently cross-linked (Glycyl lysine isopeptide (Lys-Gly) (interchain with G-Cter in SUMO1); alternate). K66 is covalently cross-linked (Glycyl lysine isopeptide (Lys-Gly) (interchain with G-Cter in SUMO2); alternate).

This sequence belongs to the prefoldin subunit beta family. As to quaternary structure, heterohexamer of two PFD-alpha type and four PFD-beta type subunits. Component of the PAQosome complex which is responsible for the biogenesis of several protein complexes and which consists of R2TP complex members RUVBL1, RUVBL2, RPAP3 and PIH1D1, URI complex members PFDN2, PFDN6, PDRG1, UXT and URI1 as well as ASDURF, POLR2E and DNAAF10/WDR92.

In terms of biological role, binds specifically to cytosolic chaperonin (c-CPN) and transfers target proteins to it. Binds to nascent polypeptide chain and promotes folding in an environment in which there are many competing pathways for nonnative proteins. The chain is Prefoldin subunit 6 (PFDN6) from Homo sapiens (Human).